The primary structure comprises 383 residues: Protein COS7 (383 aa).

The Cytoplasmic portion of the chain corresponds to 1 to 42 (MKENEVKDEKSVDVLSFKQLESQKIVLPQDLFRSSFTWFCYE). A helical membrane pass occupies residues 43 to 63 (IYKSLAFRIWMLLWLPLSVWW). At 64-72 (KLSNNCIYP) the chain is on the extracellular side. Residues 73 to 93 (LIVSLLVLFLGPIFVLVICGL) form a helical membrane-spanning segment. Residues 94 to 232 (SRKRSLSKQL…RSKLTWFLKR (139 aa)) are Cytoplasmic-facing. The chain crosses the membrane as a helical span at residues 233–253 (IFTIYSLPLWLAFLNCICVSQ). Position 254 (histidine 254) is a topological domain, extracellular. Residues 255–275 (FCLAFRILCPGLFFLMMVWLF) form a helical membrane-spanning segment. At 276–383 (QNMRTTALLV…SRNEESLMKK (108 aa)) the chain is on the cytoplasmic side.

Belongs to the DUP/COS family.

The protein localises to the membrane. This is Protein COS7 (COS7) from Saccharomyces cerevisiae (strain ATCC 204508 / S288c) (Baker's yeast).